The following is a 522-amino-acid chain: Involucrin (522 aa).

A compositionally biased stretch (polar residues) spans 1 to 15 (MSQQHTLPVTLSPAL). Disordered regions lie at residues 1 to 126 (MSQQ…LEEE), 159 to 329 (QEGQ…LVQQ), and 366 to 496 (QEGQ…QPVL). The segment covering 76–91 (EQQQQEPQEQELQQQH) has biased composition (low complexity). Basic and acidic residues predominate over residues 92-126 (WEQHEEHQKAENPEQQLKQEKAQRDQQLNEHLEEE). Residues 169–181 (QEGQLELPEQQEG) show a composition bias toward low complexity. 5 stretches are compositionally biased toward basic and acidic residues: residues 182-198 (QLEH…HLDQ), 214-231 (KHLE…HQKG), 252-264 (QLKH…KQPE), 274-290 (KHLE…EHQE), and 305-323 (QLEE…EGQL). The segment covering 375–389 (QQQGQLEVSEQQVGQ) has biased composition (low complexity). 3 stretches are compositionally biased toward basic and acidic residues: residues 391–401 (KHLEQEGKQLE), 409–418 (QLKHLEKQEA), and 431–465 (KHPE…DLEQ). Over residues 466–479 (QKGQLEQQQGQLEQ) the composition is skewed to low complexity.

The protein belongs to the involucrin family. In terms of assembly, directly or indirectly cross-linked to cornifelin (CNFN). In terms of processing, substrate of transglutaminase. Specific glutamines or lysines are cross-linked to keratins, desmoplakin and to inter involucrin molecules. As to expression, keratinocytes of epidermis and other stratified squamous epithelia.

It is found in the cytoplasm. Its function is as follows. Part of the insoluble cornified cell envelope (CE) of stratified squamous epithelia. This Hylobates lar (Lar gibbon) protein is Involucrin (IVL).